We begin with the raw amino-acid sequence, 388 residues long: tRNA (guanine(26)-N(2))-dimethyltransferase (388 aa).

Residues 4-383 (KTIVEGTTKV…APITEIKEII (380 aa)) enclose the Trm1 methyltransferase domain. Arginine 41, arginine 78, aspartate 94, and alanine 123 together coordinate S-adenosyl-L-methionine. Zn(2+)-binding residues include cysteine 251, cysteine 254, cysteine 271, and cysteine 274.

It belongs to the class I-like SAM-binding methyltransferase superfamily. Trm1 family.

It carries out the reaction guanosine(26) in tRNA + 2 S-adenosyl-L-methionine = N(2)-dimethylguanosine(26) in tRNA + 2 S-adenosyl-L-homocysteine + 2 H(+). Dimethylates a single guanine residue at position 26 of a number of tRNAs using S-adenosyl-L-methionine as donor of the methyl groups. The chain is tRNA (guanine(26)-N(2))-dimethyltransferase from Methanosarcina barkeri (strain Fusaro / DSM 804).